We begin with the raw amino-acid sequence, 356 residues long: Glutamine synthetase root isozyme 3 (356 aa).

The region spanning 19–99 (IIAEYIWIGG…VMCDCYTPAG (81 aa)) is the GS beta-grasp domain. The region spanning 106–356 (KRYNAAKIFS…IAETTIIWKP (251 aa)) is the GS catalytic domain.

Belongs to the glutamine synthetase family. Homooctamer. As to expression, found in all the tissues examined with higher expression found in tissues of the root.

It is found in the cytoplasm. It catalyses the reaction L-glutamate + NH4(+) + ATP = L-glutamine + ADP + phosphate + H(+). Its function is as follows. Plays a role in the flow of nitrogen into nitrogenous organic compounds. The chain is Glutamine synthetase root isozyme 3 (GLN4) from Zea mays (Maize).